A 256-amino-acid chain; its full sequence is N-glycosylase/DNA lyase (256 aa).

Positions 31, 58, and 69 each coordinate 8-oxoguanine. The interval 125–184 (TLRQLSHIVGARREQKTLVFTIKILNYAYMCSRGVNRVLPFDIPIPVDYRVARLTWCAGL) is helix-hairpin-helix. The active-site Schiff-base intermediate with DNA is the Lys140. 8-oxoguanine contacts are provided by Phe144 and Pro170. The active site involves Asp172. 8-oxoguanine-binding residues include Asp218 and Trp222.

Belongs to the archaeal N-glycosylase/DNA lyase (AGOG) family.

The catalysed reaction is 2'-deoxyribonucleotide-(2'-deoxyribose 5'-phosphate)-2'-deoxyribonucleotide-DNA = a 3'-end 2'-deoxyribonucleotide-(2,3-dehydro-2,3-deoxyribose 5'-phosphate)-DNA + a 5'-end 5'-phospho-2'-deoxyribonucleoside-DNA + H(+). DNA repair enzyme that is part of the base excision repair (BER) pathway; protects from oxidative damage by removing the major product of DNA oxidation, 8-oxoguanine (GO), from single- and double-stranded DNA substrates. This Pyrobaculum aerophilum (strain ATCC 51768 / DSM 7523 / JCM 9630 / CIP 104966 / NBRC 100827 / IM2) protein is N-glycosylase/DNA lyase.